A 785-amino-acid chain; its full sequence is LPS-assembly protein LptD (785 aa).

The first 58 residues, 1 to 58 (MSCSCLCMSLYRGADRIGRFYTAHCPQDMALCMHRQKLNPLALALAAAFALNAPAALA), serve as a signal peptide directing secretion.

The protein belongs to the LptD family. Component of the lipopolysaccharide transport and assembly complex. Interacts with LptE and LptA.

The protein resides in the cell outer membrane. In terms of biological role, together with LptE, is involved in the assembly of lipopolysaccharide (LPS) at the surface of the outer membrane. The chain is LPS-assembly protein LptD from Chromobacterium violaceum (strain ATCC 12472 / DSM 30191 / JCM 1249 / CCUG 213 / NBRC 12614 / NCIMB 9131 / NCTC 9757 / MK).